The chain runs to 347 residues: Probable dual-specificity RNA methyltransferase RlmN (347 aa).

Glutamate 91 (proton acceptor) is an active-site residue. The region spanning 97-327 is the Radical SAM core domain; it reads YKYGNSICVS…ATVRREMGSD (231 aa). A disulfide bridge connects residues cysteine 104 and cysteine 332. Positions 111, 115, and 118 each coordinate [4Fe-4S] cluster. S-adenosyl-L-methionine contacts are provided by residues 158–159, serine 190, 213–215, and asparagine 289; these read GE and SLH. Cysteine 332 acts as the S-methylcysteine intermediate in catalysis.

This sequence belongs to the radical SAM superfamily. RlmN family. [4Fe-4S] cluster serves as cofactor.

The protein localises to the cytoplasm. The catalysed reaction is adenosine(2503) in 23S rRNA + 2 reduced [2Fe-2S]-[ferredoxin] + 2 S-adenosyl-L-methionine = 2-methyladenosine(2503) in 23S rRNA + 5'-deoxyadenosine + L-methionine + 2 oxidized [2Fe-2S]-[ferredoxin] + S-adenosyl-L-homocysteine. It catalyses the reaction adenosine(37) in tRNA + 2 reduced [2Fe-2S]-[ferredoxin] + 2 S-adenosyl-L-methionine = 2-methyladenosine(37) in tRNA + 5'-deoxyadenosine + L-methionine + 2 oxidized [2Fe-2S]-[ferredoxin] + S-adenosyl-L-homocysteine. Functionally, specifically methylates position 2 of adenine 2503 in 23S rRNA and position 2 of adenine 37 in tRNAs. The sequence is that of Probable dual-specificity RNA methyltransferase RlmN from Clostridium perfringens (strain 13 / Type A).